The following is a 356-amino-acid chain: Competence protein ComGA (356 aa).

Residue 144-151 coordinates ATP; sequence GPTGSGKT.

Belongs to the GSP E family.

Its subcellular location is the cell membrane. Its function is as follows. Required for uptake of DNA by competent cells. The sequence is that of Competence protein ComGA (comGA) from Bacillus subtilis (strain 168).